The sequence spans 284 residues: Acetyl-coenzyme A carboxylase carboxyl transferase subunit beta (284 aa).

The region spanning 25-284 (LWVKCPETGA…LCKILTKSVQ (260 aa)) is the CoA carboxyltransferase N-terminal domain.

Belongs to the AccD/PCCB family. As to quaternary structure, acetyl-CoA carboxylase is a heterohexamer composed of biotin carboxyl carrier protein (AccB), biotin carboxylase (AccC) and two subunits each of ACCase subunit alpha (AccA) and ACCase subunit beta (AccD).

Its subcellular location is the cytoplasm. It catalyses the reaction N(6)-carboxybiotinyl-L-lysyl-[protein] + acetyl-CoA = N(6)-biotinyl-L-lysyl-[protein] + malonyl-CoA. The protein operates within lipid metabolism; malonyl-CoA biosynthesis; malonyl-CoA from acetyl-CoA: step 1/1. Component of the acetyl coenzyme A carboxylase (ACC) complex. Biotin carboxylase (BC) catalyzes the carboxylation of biotin on its carrier protein (BCCP) and then the CO(2) group is transferred by the transcarboxylase to acetyl-CoA to form malonyl-CoA. This is Acetyl-coenzyme A carboxylase carboxyl transferase subunit beta from Liberibacter asiaticus (strain psy62).